The chain runs to 529 residues: MNRRKTTSRGTSAAMKISHQPPRLLIVNIAVPSWVDICPNLCEALQNFFSIACSLMGPSRMSLFSLYTVQNQHECVLPFVQVRGNFIRLQACISELRMLQVEGCHRPPHALLPLAIEDGLQQFKQYSSHMASSAAQPWTSLEITVLTSRPGKEVVKELEEGLKDINLLSVRRLQVAEVTKGIQERSDSPSPTEEPSNDESSILEADIVLETLDNDVVSMEVFFKAWLHNSETDQENIHLLLTPQSLPPPSRAKDHPICLKCDLQERFLSPSLLPGTADGVSRIDDPKGDISTLYQMASLASASPYKLQVVKALKSSGICESLTYGLPFILRPTSCWQLDWDELETNQQHFHALCHCLLKRDWLLLARGEPLIHKHNQSLPACSFYVITPSHSLTLLVKLVATRELMLPGFFPLLSEDPPEDSLKIIESTLDSLDLGLTYNPLHVGSHLYSHLSSAHAKPQGRLYTSCASRGLRKGGQLQTNRVRAAVVPLPVAPAPRRALKMTAASKASSAAFLPSDSEEGEEERPSHT.

Disordered regions lie at residues 180-201 and 504-529; these read KGIQ…DESS and AASK…PSHT. Residues 188–200 are compositionally biased toward polar residues; that stretch reads SPSPTEEPSNDES. Position 516 is a phosphoserine (Ser516).

As to expression, expressed in germ cells of the testis. Expressed from spermatogonia to spermatids. Expressed at very low levels in lung, stomach, thymus. Not detected in Sertoli cells.

It is found in the cytoplasm. In terms of biological role, required for meiosis I progression during spermatogenesis. This chain is Meiosis 1 arrest protein (M1ap), found in Mus musculus (Mouse).